We begin with the raw amino-acid sequence, 381 residues long: MMRSHADDSAEARPAPAMSVGVFIPIGNNGWLLSENAPQYRPSFALNKAITLKAEGYGLDFALSMIKLRGFGGKTEFWDHNLESFTLMAGLAAVTTRIRLFATAATLCLPPAIVARMAATIDSISDGRFGLNLVTGWQKPEYDQMGLWPGDAHFANRYDYLAEYAQILRDLWETGASDRKGAYFQMNDCRLSPRPQAPVKIICAGQSGAGLAFTAQYADYNFCLGKGLNTPTAFAPVVEKLAEASARTGRRVTAFALFMIIADETDDAAMATWAHYRAGADAEAIAWLGAQGAADTRSGSDTNVRQLADPASAVNLNMGTLVGSYASVAAMLDAVMTIDGVEGVLLVFDDFLKGLDAFGTRIQPLMRSRRHVTAAALPEVA.

FMN-binding positions include 66–67 (IK), Asn-132, Glu-141, 157–158 (RY), and Ser-207.

This sequence belongs to the NtaA/SnaA/DszA monooxygenase family. RutA subfamily.

The catalysed reaction is uracil + FMNH2 + NADH + O2 = (Z)-3-ureidoacrylate + FMN + NAD(+) + H2O + H(+). It carries out the reaction thymine + FMNH2 + NADH + O2 = (Z)-2-methylureidoacrylate + FMN + NAD(+) + H2O + H(+). Its function is as follows. Catalyzes the pyrimidine ring opening between N-3 and C-4 by an unusual flavin hydroperoxide-catalyzed mechanism, adding oxygen atoms in the process to yield ureidoacrylate peracid, that immediately reacts with FMN forming ureidoacrylate and FMN-N(5)-oxide. The FMN-N(5)-oxide reacts spontaneously with NADH to produce FMN. Requires the flavin reductase RutF to regenerate FMN in vivo. The protein is Pyrimidine monooxygenase RutA of Methylobacterium radiotolerans (strain ATCC 27329 / DSM 1819 / JCM 2831 / NBRC 15690 / NCIMB 10815 / 0-1).